We begin with the raw amino-acid sequence, 167 residues long: Glutathione peroxidase 1 (167 aa).

C41 is a catalytic residue.

This sequence belongs to the glutathione peroxidase family.

It catalyses the reaction 2 glutathione + H2O2 = glutathione disulfide + 2 H2O. In terms of biological role, may constitute a glutathione peroxidase-like protective system against oxidative stresses. The sequence is that of Glutathione peroxidase 1 (GPXHA-1) from Helianthus annuus (Common sunflower).